The chain runs to 226 residues: Ribosomal RNA small subunit methyltransferase G (226 aa).

Residues G95, L100, 146–147 (VE), and R159 each bind S-adenosyl-L-methionine.

The protein belongs to the methyltransferase superfamily. RNA methyltransferase RsmG family.

The protein localises to the cytoplasm. The catalysed reaction is guanosine(527) in 16S rRNA + S-adenosyl-L-methionine = N(7)-methylguanosine(527) in 16S rRNA + S-adenosyl-L-homocysteine. Specifically methylates the N7 position of guanine in position 527 of 16S rRNA. The sequence is that of Ribosomal RNA small subunit methyltransferase G from Acidovorax sp. (strain JS42).